The primary structure comprises 378 residues: Putative glutamate--cysteine ligase 2 (378 aa).

Belongs to the glutamate--cysteine ligase type 2 family. YbdK subfamily.

The catalysed reaction is L-cysteine + L-glutamate + ATP = gamma-L-glutamyl-L-cysteine + ADP + phosphate + H(+). ATP-dependent carboxylate-amine ligase which exhibits weak glutamate--cysteine ligase activity. The protein is Putative glutamate--cysteine ligase 2 of Ectopseudomonas mendocina (strain ymp) (Pseudomonas mendocina).